The sequence spans 331 residues: Ketol-acid reductoisomerase (NADP(+)) (331 aa).

The KARI N-terminal Rossmann domain maps to 2-182 (AQLFYDSDAD…GGTRAGILET (181 aa)). Residues 25–28 (YGSQ), S51, S53, and 83–86 (DEFQ) each bind NADP(+). H108 is an active-site residue. G134 contacts NADP(+). The 146-residue stretch at 183-328 (NFKEETETDL…KGLRSMFSWL (146 aa)) folds into the KARI C-terminal knotted domain. Residues D191, E195, E227, and E231 each coordinate Mg(2+). A substrate-binding site is contributed by S252.

This sequence belongs to the ketol-acid reductoisomerase family. It depends on Mg(2+) as a cofactor.

The enzyme catalyses (2R)-2,3-dihydroxy-3-methylbutanoate + NADP(+) = (2S)-2-acetolactate + NADPH + H(+). It carries out the reaction (2R,3R)-2,3-dihydroxy-3-methylpentanoate + NADP(+) = (S)-2-ethyl-2-hydroxy-3-oxobutanoate + NADPH + H(+). It functions in the pathway amino-acid biosynthesis; L-isoleucine biosynthesis; L-isoleucine from 2-oxobutanoate: step 2/4. It participates in amino-acid biosynthesis; L-valine biosynthesis; L-valine from pyruvate: step 2/4. In terms of biological role, involved in the biosynthesis of branched-chain amino acids (BCAA). Catalyzes an alkyl-migration followed by a ketol-acid reduction of (S)-2-acetolactate (S2AL) to yield (R)-2,3-dihydroxy-isovalerate. In the isomerase reaction, S2AL is rearranged via a Mg-dependent methyl migration to produce 3-hydroxy-3-methyl-2-ketobutyrate (HMKB). In the reductase reaction, this 2-ketoacid undergoes a metal-dependent reduction by NADPH to yield (R)-2,3-dihydroxy-isovalerate. The chain is Ketol-acid reductoisomerase (NADP(+)) from Parasynechococcus marenigrum (strain WH8102).